We begin with the raw amino-acid sequence, 294 residues long: 33 kDa chaperonin (294 aa).

2 cysteine pairs are disulfide-bonded: cysteine 238–cysteine 240 and cysteine 271–cysteine 274.

It belongs to the HSP33 family. Under oxidizing conditions two disulfide bonds are formed involving the reactive cysteines. Under reducing conditions zinc is bound to the reactive cysteines and the protein is inactive.

It is found in the cytoplasm. Functionally, redox regulated molecular chaperone. Protects both thermally unfolding and oxidatively damaged proteins from irreversible aggregation. Plays an important role in the bacterial defense system toward oxidative stress. This is 33 kDa chaperonin from Caldanaerobacter subterraneus subsp. tengcongensis (strain DSM 15242 / JCM 11007 / NBRC 100824 / MB4) (Thermoanaerobacter tengcongensis).